The chain runs to 278 residues: tRNA pseudouridine synthase A (278 aa).

Aspartate 61 (nucleophile) is an active-site residue. Tyrosine 119 contacts substrate.

This sequence belongs to the tRNA pseudouridine synthase TruA family. In terms of assembly, homodimer.

The catalysed reaction is uridine(38/39/40) in tRNA = pseudouridine(38/39/40) in tRNA. Formation of pseudouridine at positions 38, 39 and 40 in the anticodon stem and loop of transfer RNAs. This chain is tRNA pseudouridine synthase A, found in Oleidesulfovibrio alaskensis (strain ATCC BAA-1058 / DSM 17464 / G20) (Desulfovibrio alaskensis).